A 130-amino-acid chain; its full sequence is Small ribosomal subunit protein uS8 (130 aa).

This sequence belongs to the universal ribosomal protein uS8 family. As to quaternary structure, part of the 30S ribosomal subunit. Contacts proteins S5 and S12.

Functionally, one of the primary rRNA binding proteins, it binds directly to 16S rRNA central domain where it helps coordinate assembly of the platform of the 30S subunit. This is Small ribosomal subunit protein uS8 from Shewanella pealeana (strain ATCC 700345 / ANG-SQ1).